The following is a 418-amino-acid chain: Transcription termination factor Rho (418 aa).

The Rho RNA-BD domain occupies 48 to 123; sequence DIYGDGVLEI…LKVNDINFDR (76 aa). Residues 169 to 174, 181 to 186, and Arg-212 each bind ATP; these read GKGQRG and KAGKTM.

It belongs to the Rho family. As to quaternary structure, homohexamer. The homohexamer assembles into an open ring structure.

Functionally, facilitates transcription termination by a mechanism that involves Rho binding to the nascent RNA, activation of Rho's RNA-dependent ATPase activity, and release of the mRNA from the DNA template. The sequence is that of Transcription termination factor Rho from Allochromatium vinosum (strain ATCC 17899 / DSM 180 / NBRC 103801 / NCIMB 10441 / D) (Chromatium vinosum).